The sequence spans 898 residues: Interleukin enhancer-binding factor 3 (898 aa).

Positions 5 to 378 constitute a DZF domain; that stretch reads RIFVNDDRHV…PMKRPMEEDG (374 aa). Residues 52 to 85 form a disordered region; sequence QEKGNSELSEAENMDTPPDDESKEGAGEQKAEHM. Acidic residues predominate over residues 60–73; it reads SEAENMDTPPDDES. A Phosphothreonine modification is found at Thr67. The segment covering 74 to 85 has biased composition (basic and acidic residues); that stretch reads KEGAGEQKAEHM. Lys100 carries the post-translational modification N6-acetyllysine. A Phosphothreonine; by PKR modification is found at Thr188. The residue at position 190 (Ser190) is a Phosphoserine. Residue Lys297 forms a Glycyl lysine isopeptide (Lys-Gly) (interchain with G-Cter in ubiquitin) linkage. Thr315 carries the post-translational modification Phosphothreonine; by PKR. Residue Lys348 forms a Glycyl lysine isopeptide (Lys-Gly) (interchain with G-Cter in SUMO1) linkage. Positions 363–402 are disordered; that stretch reads TTYAITPMKRPMEEDGEEKSPSKKKKKIQKKEEKADPPQA. Residues 371 to 389 carry the Bipartite nuclear localization signal motif; it reads KRPMEEDGEEKSPSKKKKK. Residues 372–383 show a composition bias toward basic and acidic residues; sequence RPMEEDGEEKSP. A phosphoserine mark is found at Ser382 and Ser384. A Glycyl lysine isopeptide (Lys-Gly) (interchain with G-Cter in SUMO2) cross-link involves residue Lys396. The DRBM 1 domain maps to 398-467; sequence DPPQAMNALM…AVKVLQDMGL (70 aa). Residue Lys460 is modified to N6-acetyllysine. Disordered regions lie at residues 466–495 and 505–524; these read GLPT…IVAP and PSSV…LTKH. A compositionally biased stretch (basic and acidic residues) spans 472 to 481; the sequence is EGRDSSKGED. Phosphoserine occurs at positions 476, 477, 482, and 486. Lys489 is covalently cross-linked (Glycyl lysine isopeptide (Lys-Gly) (interchain with G-Cter in SUMO2)). The 67-residue stretch at 524 to 590 folds into the DRBM 2 domain; sequence HGKNPVMELN…ALAALEKLFP (67 aa). Thr592 is subject to Phosphothreonine. The tract at residues 609 to 898 is interaction with PRMT1; that stretch reads RGGPKFAAKP…TEHSMNYQYR (290 aa). 2 disordered regions span residues 631–661 and 719–898; these read NEVP…GGAN and QGDS…YQYR. Residues 644–661 show a composition bias toward gly residues; it reads RGGNIRGRGRGRGFGGAN. Composition is skewed to low complexity over residues 745-769, 783-794, and 802-812; these read SYSS…SSYG, GSYSSYSNSYNS, and DYSYDSKFNYS. Residues Ser794, Ser812, Ser814, and Ser818 each carry the phosphoserine modification. Residues 813–822 show a composition bias toward gly residues; the sequence is GSGGRSGGNS. Residues 823-834 show a composition bias toward low complexity; the sequence is YGSSGSSSYNTG. Positions 835–845 are enriched in gly residues; it reads SHGGYGTGSGG. Positions 846 to 886 are enriched in low complexity; it reads SSSYQGKQGGYSSQSNYSSPGSSQSYSGPASSYQSSQGGYS.

Identified in a IGF2BP1-dependent mRNP granule complex containing untranslated mRNAs. Interacts with FUS and SMN. Interacts (via C-terminus) with PRMT1. Forms a complex with ILF2. Can also bind to PRKDC/XRCC7: this may stabilize the interaction of PRKDC/XRCC7 and the heterodimeric complex of XRCC6/KU70 and XRCC5/KU80. Forms a heteromeric complex with ZNF346 and ILF3. Found in a nuclear export complex with XPO5, ILF3, Ran and double-stranded RNA or double-stranded minihelix VA1 RNA. Found in a nuclear export complex with XPO5, RAN, ILF3, ZNF346 and double-stranded RNA. Interacts with XPO5 and ZNF346. Forms a complex with ILF2, YLPM1, KHDRBS1, RBMX, NCOA5 and PPP1CA. Interacts with AGO1 and AGO2. Interacts with DHX36; this interaction occurs in a RNA-dependent manner. Interacts with ELAVL1; this interaction occurs in a RNA-dependent manner. Interacts with HAVCR2; this interaction promotes ILF3 ubiquitination and subsequent degradation. In terms of processing, phosphorylated at Thr-188 and Thr-315 by PKR in response to RNA viruses. This phosphorylation results in the dissociation of ILF2 from the ILF2-ILF3 complex resulting in a cytoplasmic sequestration of ILF3 where it can bind to viral RNAs and impede viral replication. Methylated by protein arginine N-methyltransferase 1. As to expression, ubiquitous. Expressed at high levels in the thymus, testis, ovary and at lower levelss in the spleen.

The protein localises to the nucleus. It is found in the nucleolus. The protein resides in the cytoplasm. Functionally, RNA-binding protein that plays an essential role in the biogenesis of circular RNAs (circRNAs) which are produced by back-splicing circularization of pre-mRNAs. Within the nucleus, promotes circRNAs processing by stabilizing the regulatory elements residing in the flanking introns of the circularized exons. Plays thereby a role in the back-splicing of a subset of circRNAs. As a consequence, participates in a wide range of transcriptional and post-transcriptional processes. Binds to poly-U elements and AU-rich elements (AREs) in the 3'-UTR of target mRNAs. Upon viral infection, ILF3 accumulates in the cytoplasm and participates in the innate antiviral response. Mechanistically, ILF3 becomes phosphorylated and activated by the double-stranded RNA-activated protein kinase/PKR which releases ILF3 from cellular mature circRNAs. In turn, unbound ILF3 molecules are able to interact with and thus inhibit viral mRNAs. This is Interleukin enhancer-binding factor 3 (Ilf3) from Mus musculus (Mouse).